The primary structure comprises 101 residues: Small ribosomal subunit protein bS18c (101 aa).

It belongs to the bacterial ribosomal protein bS18 family. Part of the 30S ribosomal subunit.

It is found in the plastid. The protein localises to the chloroplast. This chain is Small ribosomal subunit protein bS18c, found in Aethionema grandiflorum (Persian stone-cress).